The sequence spans 1216 residues: ATP-dependent helicase/nuclease subunit A (1216 aa).

The UvrD-like helicase ATP-binding domain maps to 26–488 (QKKTAEQIEA…IILKENFRSS (463 aa)). An ATP-binding site is contributed by 47 to 54 (ASAGSGKT). The region spanning 515 to 802 (KHQLVFANTK…ELMTIHKSKG (288 aa)) is the UvrD-like helicase C-terminal domain.

Belongs to the helicase family. AddA subfamily. As to quaternary structure, heterodimer of AddA and AddB/RexB. The cofactor is Mg(2+).

It carries out the reaction Couples ATP hydrolysis with the unwinding of duplex DNA by translocating in the 3'-5' direction.. The enzyme catalyses ATP + H2O = ADP + phosphate + H(+). The heterodimer acts as both an ATP-dependent DNA helicase and an ATP-dependent, dual-direction single-stranded exonuclease. Recognizes the chi site generating a DNA molecule suitable for the initiation of homologous recombination. The AddA nuclease domain is required for chi fragment generation; this subunit has the helicase and 3' -&gt; 5' nuclease activities. The polypeptide is ATP-dependent helicase/nuclease subunit A (Streptococcus pneumoniae serotype 2 (strain D39 / NCTC 7466)).